The primary structure comprises 90 residues: DNA-directed RNA polymerase subunit omega (90 aa).

Belongs to the RNA polymerase subunit omega family. In terms of assembly, the RNAP catalytic core consists of 2 alpha, 1 beta, 1 beta' and 1 omega subunit. When a sigma factor is associated with the core the holoenzyme is formed, which can initiate transcription.

The enzyme catalyses RNA(n) + a ribonucleoside 5'-triphosphate = RNA(n+1) + diphosphate. Functionally, promotes RNA polymerase assembly. Latches the N- and C-terminal regions of the beta' subunit thereby facilitating its interaction with the beta and alpha subunits. The polypeptide is DNA-directed RNA polymerase subunit omega (Saccharophagus degradans (strain 2-40 / ATCC 43961 / DSM 17024)).